A 91-amino-acid chain; its full sequence is Acyl carrier protein AsbD (91 aa).

Residues 4-82 (EALKNAVLKI…SLLDFMEELQ (79 aa)) form the Carrier domain. S40 carries the O-(pantetheine 4'-phosphoryl)serine modification.

Belongs to the acyl carrier protein (ACP) family. In terms of processing, activated by the transfer of a 4'-phosphopantetheine group from CoA to Ser-40.

Its pathway is siderophore biosynthesis; petrobactin biosynthesis. In terms of biological role, involved in the biosynthesis of petrobactin, a catecholate siderophore that functions in both iron acquisition and virulence. Aryl-carrier protein that activates 3,4-dihydroxybenzoate (3,4-DHBA) prior to its incorporation into petrobactin. This chain is Acyl carrier protein AsbD, found in Bacillus anthracis.